Here is a 581-residue protein sequence, read N- to C-terminus: Potassium-transporting ATPase potassium-binding subunit (581 aa).

12 helical membrane-spanning segments follow: residues 2–22 (LQGW…TPFF), 74–94 (AVIA…PLNP), 135–155 (GLGY…IAFI), 177–197 (ILLP…VPET), 255–275 (LVQL…YGVF), 284–304 (LIYL…AIGE), 332–352 (WAQS…AVIA), 357–377 (LMPN…VFGG), 381–401 (GTAY…LMVG), 421–441 (FLIL…ALAF), 501–521 (LSAC…LLLL), and 550–570 (AGVI…LGPI).

This sequence belongs to the KdpA family. In terms of assembly, the system is composed of three essential subunits: KdpA, KdpB and KdpC.

The protein resides in the cell inner membrane. Its function is as follows. Part of the high-affinity ATP-driven potassium transport (or Kdp) system, which catalyzes the hydrolysis of ATP coupled with the electrogenic transport of potassium into the cytoplasm. This subunit binds the periplasmic potassium ions and delivers the ions to the membrane domain of KdpB through an intramembrane tunnel. The protein is Potassium-transporting ATPase potassium-binding subunit of Microcystis aeruginosa (strain NIES-843 / IAM M-2473).